We begin with the raw amino-acid sequence, 98 residues long: NADH-ubiquinone oxidoreductase chain 4L (98 aa).

Transmembrane regions (helical) follow at residues 1-21, 29-49, and 61-81; these read MSLI…GLLM, ALLC…LTIL, and IILL…LVMI.

This sequence belongs to the complex I subunit 4L family. In terms of assembly, core subunit of respiratory chain NADH dehydrogenase (Complex I) which is composed of 45 different subunits.

Its subcellular location is the mitochondrion inner membrane. The enzyme catalyses a ubiquinone + NADH + 5 H(+)(in) = a ubiquinol + NAD(+) + 4 H(+)(out). In terms of biological role, core subunit of the mitochondrial membrane respiratory chain NADH dehydrogenase (Complex I) which catalyzes electron transfer from NADH through the respiratory chain, using ubiquinone as an electron acceptor. Part of the enzyme membrane arm which is embedded in the lipid bilayer and involved in proton translocation. This chain is NADH-ubiquinone oxidoreductase chain 4L (MT-ND4L), found in Berardius bairdii (Baird's beaked whale).